A 104-amino-acid polypeptide reads, in one-letter code: Thiosulfate sulfurtransferase PspE (104 aa).

Residues 1 to 19 (MFKKGLLALALVFSLPVFA) form the signal peptide. Positions 20 to 104 (AEHWIDVRVP…KDIAMPKVKG (85 aa)) constitute a Rhodanese domain. The active-site Cysteine persulfide intermediate is the cysteine 67.

As to quaternary structure, monomer.

The protein localises to the periplasm. It carries out the reaction thiosulfate + hydrogen cyanide = thiocyanate + sulfite + 2 H(+). Inhibited by thiosulfate above 100 mM, particularly at low cyanide concentrations (&lt;5 mM). Inhibited by sodium sulfate or sodium chloride at 0.25 M which gives around 50% inhibition of rhodanese activity. Addition of sodium phosphate at the same concentration results in about 65% inhibition. Sulfite strongly inhibits PspE activity (1 mM sodium sulfite resulted in more than 50% inhibition of rhodanese activity). Functionally, the phage shock protein (psp) operon (pspABCDE) may play a significant role in the competition for survival under nutrient- or energy-limited conditions. PspE catalyzes the sulfur-transfer reaction from thiosulfate to cyanide, to form sulfite and thiocyanate. Also able to use dithiol (dithiothreitol) as an alternate sulfur acceptor. Also possesses a very low mercaptopyruvate sulfurtransferase activity. The sequence is that of Thiosulfate sulfurtransferase PspE (pspE) from Escherichia coli (strain K12).